The primary structure comprises 205 residues: Ribosomal RNA small subunit methyltransferase G (205 aa).

Residues Gly76, Leu81, 127–128 (IE), and Arg140 contribute to the S-adenosyl-L-methionine site.

This sequence belongs to the methyltransferase superfamily. RNA methyltransferase RsmG family.

It localises to the cytoplasm. It catalyses the reaction guanosine(527) in 16S rRNA + S-adenosyl-L-methionine = N(7)-methylguanosine(527) in 16S rRNA + S-adenosyl-L-homocysteine. In terms of biological role, specifically methylates the N7 position of guanine in position 527 of 16S rRNA. The chain is Ribosomal RNA small subunit methyltransferase G from Francisella tularensis subsp. tularensis (strain FSC 198).